The chain runs to 375 residues: 23S rRNA (uracil(747)-C(5))-methyltransferase RlmC (375 aa).

[4Fe-4S] cluster contacts are provided by cysteine 3, cysteine 11, cysteine 14, and cysteine 87. S-adenosyl-L-methionine contacts are provided by glutamine 212, phenylalanine 241, glutamate 262, and asparagine 307. The active-site Nucleophile is the cysteine 334.

It belongs to the class I-like SAM-binding methyltransferase superfamily. RNA M5U methyltransferase family. RlmC subfamily.

It carries out the reaction uridine(747) in 23S rRNA + S-adenosyl-L-methionine = 5-methyluridine(747) in 23S rRNA + S-adenosyl-L-homocysteine + H(+). Its function is as follows. Catalyzes the formation of 5-methyl-uridine at position 747 (m5U747) in 23S rRNA. In Escherichia coli (strain K12 / MC4100 / BW2952), this protein is 23S rRNA (uracil(747)-C(5))-methyltransferase RlmC.